A 171-amino-acid polypeptide reads, in one-letter code: Protein X (171 aa).

Transmembrane regions (helical) follow at residues 11-31, 38-58, and 73-93; these read SWYQ…IYSL, LAGI…VYLM, and AVIA…WLVI.

The protein resides in the virion membrane. This Mus musculus domesticus (western European house mouse) protein is Protein X (VPX).